Reading from the N-terminus, the 575-residue chain is MKKALVFFVALAMIGSVFAAEPAAEAKVAEFSGNAAVTFGFDLDTVKAGFKNTTEADLKFNLMNGGDKSTTGNGVWGELKLVVNALQIRATADVSDGHTFAIQTKKDNDGEDTIFVEIDTAKLHFNDLYVGITSGDFRYGGSFWYPNALNYKDSKEDEKYTRSRAAKLGYDQGLVLGYEKKDLFKVELAARSKKDTTKKVEKVELVHLSAGAKIKEKEYYKTEPAAVTGDTAQDIFNDGTLVSVTADPKVKTLNAEGAYYKPVMKDDETNYWTNKFALGLYGEVTPIKDLRIGVGAAYVLGQLGAAASEDDKTNDISVFAGVDYRFNFNEDFFIQPTVTYNFYNDYKVASKNYAIETNKMNAGLRFGFAKSKSDSENESLLYTFFGQEKLFYETTKNDKGDQILLPGVSVFGSFNFKENAMKTELPVMLTFYSGELVQNLKAYALFGANLGPDAGKGTAVAMSDAVYKGIIEKKGMQAGLAASYDVKVNDAVTIVPAAGVLWTHGSQASGNDKMSADEVAVSLKADVKGLVSNTTFTAFWEKASFGKGAASVGGTKTSVDAVKKGVIGLKAKIAL.

An N-terminal signal peptide occupies residues 1-19 (MKKALVFFVALAMIGSVFA).

The protein localises to the cell outer membrane. In terms of biological role, major component of the outer membrane sheath. The protein is Major outer membrane protein MspA (mspA) of Treponema maltophilum.